The following is a 313-amino-acid chain: Cytosolic Fe-S cluster assembly factor NUBP1 homolog (313 aa).

Residues 1–25 are disordered; sequence MSDVPEDANAGCPGTGSAGAGKASG. 4 residues coordinate [4Fe-4S] cluster: Cys-12, Cys-26, Cys-29, and Cys-35. 66-73 is a binding site for ATP; that stretch reads GKGGVGKS. [4Fe-4S] cluster-binding residues include Cys-240 and Cys-243.

The protein belongs to the Mrp/NBP35 ATP-binding proteins family. NUBP1/NBP35 subfamily. As to quaternary structure, heterotetramer of 2 NUBP1 and 2 NUBP2 chains. The cofactor is [4Fe-4S] cluster.

It is found in the cytoplasm. The protein resides in the cell projection. Component of the cytosolic iron-sulfur (Fe/S) protein assembly (CIA) machinery. Required for maturation of extramitochondrial Fe-S proteins. The NUBP1-NUBP2 heterotetramer forms a Fe-S scaffold complex, mediating the de novo assembly of an Fe-S cluster and its transfer to target apoproteins. Regulates cilium formation and structure. The polypeptide is Cytosolic Fe-S cluster assembly factor NUBP1 homolog (Caenorhabditis briggsae).